The chain runs to 1017 residues: Probable DNA ligase (1017 aa).

The interval 1 to 363 (MPWDVKFSHG…PACATPLHAP (363 aa)) is unknown. Residues 326-352 (GIRSSPPQVRAGDATPSSRSSGDAGVA) are disordered. The segment at 364-1017 (DSFARFVAAA…GARPPPAASD (654 aa)) is DNA ligase. Glu-667 serves as a coordination point for ATP. The active-site N6-AMP-lysine intermediate is the Lys-669. ATP contacts are provided by Arg-674, Arg-689, Glu-717, Arg-860, and Lys-866.

It in the C-terminal section; belongs to the ATP-dependent DNA ligase family. Mg(2+) is required as a cofactor.

The enzyme catalyses ATP + (deoxyribonucleotide)n-3'-hydroxyl + 5'-phospho-(deoxyribonucleotide)m = (deoxyribonucleotide)n+m + AMP + diphosphate.. In terms of biological role, DNA ligase that seals nicks in double-stranded DNA during DNA replication, DNA recombination and DNA repair. This Opitutus terrae (strain DSM 11246 / JCM 15787 / PB90-1) protein is Probable DNA ligase (lig).